The primary structure comprises 555 residues: Trehalase (555 aa).

An N-terminal signal peptide occupies residues 1 to 16 (MIPFLLMVAFADTVLQ). N-linked (GlcNAc...) asparagine glycosylation is present at Asn-46. Residues Arg-164, 171-172 (WD), and Asn-208 each bind substrate. Asn-216 carries N-linked (GlcNAc...) asparagine glycosylation. Residues 217-219 (RSQ), 282-284 (RPE), and Gly-316 contribute to the substrate site. Catalysis depends on Asp-318, which acts as the Proton donor/acceptor. N-linked (GlcNAc...) asparagine glycosylation is found at Asn-334 and Asn-371. The Proton donor/acceptor role is filled by Glu-516. Glu-531 contacts substrate.

The protein belongs to the glycosyl hydrolase 37 family. In terms of tissue distribution, bean-shaped accessory glands (bags).

The protein localises to the secreted. The enzyme catalyses alpha,alpha-trehalose + H2O = alpha-D-glucose + beta-D-glucose. The protein is Trehalase of Tenebrio molitor (Yellow mealworm beetle).